The following is a 258-amino-acid chain: UPF0246 protein YaaA (258 aa).

This sequence belongs to the UPF0246 family.

This is UPF0246 protein YaaA from Shigella dysenteriae serotype 1 (strain Sd197).